The chain runs to 88 residues: Small ribosomal subunit protein bS20 (88 aa).

The interval 1–20 (MANTKSARKSLIKSKQQRKC) is disordered.

The protein belongs to the bacterial ribosomal protein bS20 family.

Functionally, binds directly to 16S ribosomal RNA. The polypeptide is Small ribosomal subunit protein bS20 (Blochmanniella pennsylvanica (strain BPEN)).